Reading from the N-terminus, the 24-residue chain is Antimicrobial peptide PGQ (24 aa).

Belongs to the gastrin/cholecystokinin family. Magainin subfamily. As to expression, is synthesized in the stomach and stored in a novel granular multinucleated cell in the gastric mucosa. It is stored as active, processed peptides in large granules within the granular gland secretions of the skin.

It is found in the secreted. Its function is as follows. Antimicrobial peptide. In Xenopus laevis (African clawed frog), this protein is Antimicrobial peptide PGQ (pgq).